We begin with the raw amino-acid sequence, 475 residues long: Aspartyl/glutamyl-tRNA(Asn/Gln) amidotransferase subunit B (475 aa).

Belongs to the GatB/GatE family. GatB subfamily. In terms of assembly, heterotrimer of A, B and C subunits.

The catalysed reaction is L-glutamyl-tRNA(Gln) + L-glutamine + ATP + H2O = L-glutaminyl-tRNA(Gln) + L-glutamate + ADP + phosphate + H(+). It carries out the reaction L-aspartyl-tRNA(Asn) + L-glutamine + ATP + H2O = L-asparaginyl-tRNA(Asn) + L-glutamate + ADP + phosphate + 2 H(+). In terms of biological role, allows the formation of correctly charged Asn-tRNA(Asn) or Gln-tRNA(Gln) through the transamidation of misacylated Asp-tRNA(Asn) or Glu-tRNA(Gln) in organisms which lack either or both of asparaginyl-tRNA or glutaminyl-tRNA synthetases. The reaction takes place in the presence of glutamine and ATP through an activated phospho-Asp-tRNA(Asn) or phospho-Glu-tRNA(Gln). The polypeptide is Aspartyl/glutamyl-tRNA(Asn/Gln) amidotransferase subunit B (Mycoplasma mobile (strain ATCC 43663 / 163K / NCTC 11711) (Mesomycoplasma mobile)).